A 1080-amino-acid polypeptide reads, in one-letter code: Presequence protease 2, chloroplastic/mitochondrial (1080 aa).

Residues 1 to 84 constitute a chloroplast and mitochondrion transit peptide; sequence MLRSLTCSST…NGQFSRLSIR (84 aa). H161 is a binding site for Zn(2+). The Proton acceptor role is filled by E164. H165 provides a ligand contact to Zn(2+). E239 is a catalytic residue. Residue E261 coordinates Zn(2+). R704 is a Mg(2+) binding site.

This sequence belongs to the peptidase M16 family. PreP subfamily. In terms of assembly, homodimer. Zn(2+) serves as cofactor. Mg(2+) is required as a cofactor. In terms of tissue distribution, expressed in leaves, flowers and roots, but not detected in siliques and shoots.

Its subcellular location is the plastid. The protein resides in the chloroplast stroma. The protein localises to the mitochondrion matrix. Its activity is regulated as follows. Completely inhibited by the metal chelator orthophenanthroline. ATP-independent protease that degrades both mitochondrial and chloroplastic transit peptides after their cleavage. Also degrades other unstructured peptides. Specific for peptides in the range of 10 to 65 residues. Shows a preference for cleavage after small polar residues and before basic residues, but without any positional preference. In Arabidopsis thaliana (Mouse-ear cress), this protein is Presequence protease 2, chloroplastic/mitochondrial (PREP2).